We begin with the raw amino-acid sequence, 273 residues long: Nucleotide-binding protein TTHA0319 (273 aa).

8-15 (GLSGAGKT) provides a ligand contact to ATP. 57-60 (DARA) serves as a coordination point for GTP.

This sequence belongs to the RapZ-like family.

Functionally, displays ATPase and GTPase activities. The sequence is that of Nucleotide-binding protein TTHA0319 from Thermus thermophilus (strain ATCC 27634 / DSM 579 / HB8).